The chain runs to 402 residues: Non-homologous end joining protein Ku (402 aa).

Positions 12–185 (ISFGLVTIPV…VAALTGIAQP (174 aa)) constitute a Ku domain. Positions 261–402 (QRAAGGATGG…GPDETAPGGP (142 aa)) are disordered. Low complexity-rich tracts occupy residues 299–308 (GDPAASVPGV) and 332–343 (VPGVPATAVPGT). Residues 344-358 (PGAPVPTAPGVPSAP) are compositionally biased toward pro residues. Residues 359–376 (APGTSPTSVPGVQTAPNG) show a composition bias toward low complexity.

The protein belongs to the prokaryotic Ku family. As to quaternary structure, homodimer. Interacts with LigD.

Its function is as follows. With LigD forms a non-homologous end joining (NHEJ) DNA repair enzyme, which repairs dsDNA breaks with reduced fidelity. Binds linear dsDNA with 5'- and 3'- overhangs but not closed circular dsDNA nor ssDNA. Recruits and stimulates the ligase activity of LigD. In Symbiobacterium thermophilum (strain DSM 24528 / JCM 14929 / IAM 14863 / T), this protein is Non-homologous end joining protein Ku.